A 167-amino-acid polypeptide reads, in one-letter code: MPRSQKNDNFIDKTFTIVADILLRIIPTTQREKEAFTYYRDGMSAQSEGEYAEALQNYYEAMRLEIDPYDRSYILYNIGLIHTSNGEHAKALEYYFQALERNPSLPQAFNNMAVICHYRGEQAIQQGDPEASETWFDQAAEYWKQAILLAPSNYIEAHNWLKMTGRF.

TPR repeat units lie at residues 35–68 (AFTY…EIDP), 72–105 (SYIL…NPSL), and 120–153 (GEQA…APSN).

It belongs to the Ycf3 family.

The protein resides in the plastid. The protein localises to the chloroplast thylakoid membrane. Its function is as follows. Essential for the assembly of the photosystem I (PSI) complex. May act as a chaperone-like factor to guide the assembly of the PSI subunits. In Marchantia polymorpha (Common liverwort), this protein is Photosystem I assembly protein Ycf3.